Consider the following 369-residue polypeptide: tRNA pseudouridine synthase D (369 aa).

The Nucleophile role is filled by D80. Residues 156-318 form the TRUD domain; it reads GIPNWFGEQR…LKQERRALRL (163 aa).

It belongs to the pseudouridine synthase TruD family.

It carries out the reaction uridine(13) in tRNA = pseudouridine(13) in tRNA. Responsible for synthesis of pseudouridine from uracil-13 in transfer RNAs. This is tRNA pseudouridine synthase D from Xanthomonas euvesicatoria pv. vesicatoria (strain 85-10) (Xanthomonas campestris pv. vesicatoria).